Reading from the N-terminus, the 319-residue chain is Ninja-family protein Os07g0602900 (319 aa).

Disordered regions lie at residues 1 to 26 (MAAS…EKGG), 69 to 152 (LPGG…DAMY), and 181 to 234 (AEAM…LTMR). A compositionally biased stretch (gly residues) spans 70-79 (PGGGGGGAGG). Positions 105–118 (ERWRRREMQSLKRL) are enriched in basic and acidic residues. Residues 185 to 196 (DTSSSDNASCQN) show a composition bias toward polar residues. Low complexity predominate over residues 225–234 (LRTLRSLTMR).

This sequence belongs to the Ninja family.

It localises to the nucleus. In Oryza sativa subsp. japonica (Rice), this protein is Ninja-family protein Os07g0602900.